A 464-amino-acid polypeptide reads, in one-letter code: Protein FAM90A13 (464 aa).

3 disordered regions span residues 1–42 (MMAR…DPRL), 69–389 (VPAT…HDGA), and 411–437 (APSFHSPEKPGAFLAQSPHVSEKSEAP). 2 stretches are compositionally biased toward basic and acidic residues: residues 74 to 89 (GKKEGKENLKPWKPRG) and 97 to 114 (NKDKGEKEERPRQQDPQR). Low complexity predominate over residues 180-197 (LASLSPLRKASLSSSSSL).

The protein belongs to the FAM90 family.

The chain is Protein FAM90A13 from Homo sapiens (Human).